Reading from the N-terminus, the 375-residue chain is Ornithine transcarbamylase, chloroplastic (375 aa).

Residues 1-53 constitute a chloroplast transit peptide; sequence MAAAMASHVSTARSPALSFSSSSSSFFPGTTLRRFSAVSLPSPALPRLRVSCQ. A54 carries the N-acetylalanine modification. Carbamoyl phosphate-binding positions include 123-126, R174, H201, and Q204; that span reads SMRT. Positions 232, 293, 297, and 298 each coordinate L-ornithine. Catalysis depends on C333, which acts as the Proton acceptor. Residues 333 to 334 and R361 contribute to the carbamoyl phosphate site; that span reads CL.

It belongs to the aspartate/ornithine carbamoyltransferase superfamily. OTCase family.

The protein resides in the plastid. It localises to the chloroplast. The catalysed reaction is carbamoyl phosphate + L-ornithine = L-citrulline + phosphate + H(+). The chain is Ornithine transcarbamylase, chloroplastic (OTC) from Arabidopsis thaliana (Mouse-ear cress).